We begin with the raw amino-acid sequence, 368 residues long: Ribosomal RNA large subunit methyltransferase M (368 aa).

S-adenosyl-L-methionine contacts are provided by residues Ser-199, 232 to 235 (APGG), Asp-251, Asp-271, and Asp-287. Lys-316 serves as the catalytic Proton acceptor.

It belongs to the class I-like SAM-binding methyltransferase superfamily. RNA methyltransferase RlmE family. RlmM subfamily. In terms of assembly, monomer.

Its subcellular location is the cytoplasm. The catalysed reaction is cytidine(2498) in 23S rRNA + S-adenosyl-L-methionine = 2'-O-methylcytidine(2498) in 23S rRNA + S-adenosyl-L-homocysteine + H(+). Catalyzes the 2'-O-methylation at nucleotide C2498 in 23S rRNA. This Aromatoleum aromaticum (strain DSM 19018 / LMG 30748 / EbN1) (Azoarcus sp. (strain EbN1)) protein is Ribosomal RNA large subunit methyltransferase M.